A 559-amino-acid polypeptide reads, in one-letter code: Membrane protein insertase YidC (559 aa).

Helical transmembrane passes span 5–25 (IVNL…WQYF), 332–352 (AIDF…MNFF), 355–375 (YVGN…LLMF), 429–449 (LPIL…YVTI), 474–494 (LFGL…WPIL), and 520–540 (FMPL…LIYW).

The protein belongs to the OXA1/ALB3/YidC family. Type 1 subfamily. In terms of assembly, interacts with the Sec translocase complex via SecD. Specifically interacts with transmembrane segments of nascent integral membrane proteins during membrane integration.

The protein localises to the cell inner membrane. Functionally, required for the insertion and/or proper folding and/or complex formation of integral membrane proteins into the membrane. Involved in integration of membrane proteins that insert both dependently and independently of the Sec translocase complex, as well as at least some lipoproteins. Aids folding of multispanning membrane proteins. This chain is Membrane protein insertase YidC, found in Rickettsia bellii (strain OSU 85-389).